The following is a 128-amino-acid chain: Protein BEX2 (128 aa).

Position 50 is an omega-N-methylarginine (R50). The tract at residues 107-128 is disordered; sequence SLRAVSTDPPHHDHHDEFCLMP. The segment covering 115–128 has biased composition (basic and acidic residues); sequence PPHHDHHDEFCLMP. The tract at residues 117 to 121 is his cluster; the sequence is HHDHH. C125 serves as a coordination point for Zn(2+).

It belongs to the BEX family. In terms of assembly, interacts with LMO2, possibly leading to regulate the transcriptional activity of a DNA-binding complex containing LMO2. Interacts with OMP. In terms of tissue distribution, expressed in central nervous system, with high level in pituitary, cerebellum and temporal lobe. Widely expressed in breast cancer cell lines.

The protein localises to the cytoplasm. It is found in the nucleus. In terms of biological role, regulator of mitochondrial apoptosis and G1 cell cycle in breast cancer. Protects the breast cancer cells against mitochondrial apoptosis and this effect is mediated through the modulation of BCL2 protein family, which involves the positive regulation of anti-apoptotic member BCL2 and the negative regulation of pro-apoptotic members BAD, BAK1 and PUMA. Required for the normal cell cycle progression during G1 in breast cancer cells through the regulation of CCND1 and CDKN1A. Regulates the level of PP2A regulatory subunit B and PP2A phosphatase activity. In absence of reductive stress, acts as a pseudosubstrate for the CRL2(FEM1B) complex: associates with FEM1B via zinc, thereby preventing association between FEM1B and its substrates. The protein is Protein BEX2 (BEX2) of Homo sapiens (Human).